The following is a 467-amino-acid chain: L-seryl-tRNA(Sec) selenium transferase (467 aa).

Lys298 is modified (N6-(pyridoxal phosphate)lysine).

This sequence belongs to the SelA family. The cofactor is pyridoxal 5'-phosphate.

It localises to the cytoplasm. It carries out the reaction L-seryl-tRNA(Sec) + selenophosphate + H(+) = L-selenocysteinyl-tRNA(Sec) + phosphate. Its pathway is aminoacyl-tRNA biosynthesis; selenocysteinyl-tRNA(Sec) biosynthesis; selenocysteinyl-tRNA(Sec) from L-seryl-tRNA(Sec) (bacterial route): step 1/1. Converts seryl-tRNA(Sec) to selenocysteinyl-tRNA(Sec) required for selenoprotein biosynthesis. The protein is L-seryl-tRNA(Sec) selenium transferase of Alkaliphilus metalliredigens (strain QYMF).